Reading from the N-terminus, the 369-residue chain is Endophilin-A (369 aa).

Residues 18–248 (TEKMGGAEGT…LQEKRAEAES (231 aa)) form the BAR domain. Residues 227-249 (QCADVLRGLQETLQEKRAEAESR) adopt a coiled-coil conformation. Residues 275–294 (GTPSHISSSASPLPSPMRSP) show a composition bias toward low complexity. Residues 275–297 (GTPSHISSSASPLPSPMRSPAKS) form a disordered region. The SH3 domain occupies 305-364 (QQQPCCQALYDFDPENPGELGFKENDIITLLNRVDDNWYEGAVNGRTGYFPQSYVQVQVP).

It belongs to the endophilin family.

The protein localises to the cytoplasm. The protein resides in the membrane. Its function is as follows. Required presynaptically at the neuromuscular junction. Implicated in synaptic vesicle endocytosis. The sequence is that of Endophilin-A from Drosophila virilis (Fruit fly).